A 100-amino-acid polypeptide reads, in one-letter code: Urease subunit gamma (100 aa).

Belongs to the urease gamma subunit family. In terms of assembly, heterotrimer of UreA (gamma), UreB (beta) and UreC (alpha) subunits. Three heterotrimers associate to form the active enzyme.

Its subcellular location is the cytoplasm. The enzyme catalyses urea + 2 H2O + H(+) = hydrogencarbonate + 2 NH4(+). It functions in the pathway nitrogen metabolism; urea degradation; CO(2) and NH(3) from urea (urease route): step 1/1. This is Urease subunit gamma from Acetivibrio thermocellus (strain ATCC 27405 / DSM 1237 / JCM 9322 / NBRC 103400 / NCIMB 10682 / NRRL B-4536 / VPI 7372) (Clostridium thermocellum).